The primary structure comprises 1892 residues: MATILPPPGTALFRHFTRQSLATIERLKEETLIAPKAGAHEEEEPPTPNPDLEAGKSLPMIFGDPPSELLGTPLEDIDPFYKAQKTFVVVTKGNTIYRFNAEPACYILSPFSLVRRGAIKILIHSLFSTLIMITILSNCVFMTMSNPPAWSKTVEYVFTGIYTFEATVKVLSRGFCVGPFTFLRDPWNWLDFMVISMAYITEFVDLGNVSALRTFRVLRALKTITVIPGLKTIVAALIQSVKKMVDVMILTVFALAVFALVGLQLFMGNLRHKCIRWPIANETASELFNGTVFNDTLSYNDTTWLNDTLDSNSTFDFTEYIENAENQYFLEGSKDALLCGNSTDAGKCPEGYLCMKAGRNPNYGYTSFDSFGWAFLALFRLMTQDNWESLFQLTLRAAGQTYMLFFVVVIFLGSFYLINLILAVVAMAYDEQNQASQQEAKEKEEEFQRLLEQLKNQEQAQVLGSRASLTSKKSVSLTGSDVADDEQSLENNEALKDCNGRPIPRLIIRAPTMKESAADYELREKEESSVHSVLHLDEPGLRERSASVATAAASVATAAASVATAAAMEELEEAQRPCPPIWYRFADIFLKWNCCEKWVVFKKWVHFVVMDPFVDLAITICIVLNTLFMAMEHYPMTEEFDYMLSVGNLVFTGIFAAEMFFKLIAMDPYYYFQVGWNIFDSIIVTLSLVELGLANVQGLSVLRSFRLLRVFKLAKSWPTLNMLIKIIGNSVGALGNLTLVLAIIVFIFAVVGMQLFGKSYKDCVCKISSDCELPRWHMNDFFHSFLIVFRILCGEWIETMWDCMEVAGAGMCLVVFMMVMVIGNLVVLNLFLALLLSSFSGDNLSVGDDDGELNNLQIAIGRITRGGNWLKAFLIGTVQRVLGREPQKPAEEDPADEGEGKTEGMEMNHLDGFKLADGIANCLVGGQPSGVTLDGESSITVPIALGESDSENPSEDDDDQEDDVDSEVTCEENEHHSDGVEDEFGVLQHVKLMGALTDGDSSVCSTVDYQPPEPEVQEEEEEEPDLVEPEACFTDNCVKRWPCLNVDISQGKGKKWWNLRKTCFTIVEHDWFETFIIFMILLSSGALAFEDIYIERRRTVKIVLEFADKVFTFIFVIEMLLKWVAYGFKTYFTNAWCWLDFFIVDISLISLSANLMGFSDLGPIKSLRTLRALRPLRALSRFEGMRVVVNALIGAIPSIFNVLLVCLIFWLIFSIMGVNLFAGKFYRCINTTTAELFPISVVNNKSDCVALQEATQEARWVNVKVNYDNVAKGYLSLLQIATFKGWMDIMYPAVDSREVEEQPSYEINLYMYIYFVIFIIFGSFFTLNLFIGVIIDNFNQQKKKLGDKDIFMTEEQKKYYEAMKKLGSKKPQKPIPRPANLIQGLVFDFISQQFFDIFIMVLICLNMVTMMVETDDQSPAKEDFLFKVNVAFIVVFTGECTLKLFALRHYFFTNGWNIFDFIVVILSIAGTMLSDIIEKYFVSPTLFRVIRLARIGRILRLIKGARGIRTLLFALMMSLPALFNIGLLLFLIMFIFSIFGMSNFAYVKKEAGINDMFNFETFGSSIICLFQITTSAGWDTLLLPMLNKEPPDCDPAFENPGTDVKGNCGNPMMGMVFFCSYIIISFLVVVNMYIAIILENFNVAQEESGDVLCEEDFEMFNETWEKFDTGGTQFIEYSQLSDFCDALQEPLRVAKPNRQRLIEMDLPLVIGDRIHCVDVLLAVTQEVLGDTIEMVAMRESIEAKFNLNNPTSASYAPITTTVRQKEEDMAAVVIQRAYRNHLHKRGIHHAAYIQRSKTGRKAASEDAPEKEGLLAKKMGALYGSDADLADEVEGLRRRPDPQTRCSGARCSPEPPEPNIILVPVEITNELLLHSAPSQQSSPTQTILRETNV.

Topologically, residues 1 to 125 (MATILPPPGT…RGAIKILIHS (125 aa)) are cytoplasmic. The tract at residues 34–54 (APKAGAHEEEEPPTPNPDLEA) is disordered. One copy of the I repeat lies at 107–433 (ILSPFSLVRR…VVAMAYDEQN (327 aa)). Residues 126–144 (LFSTLIMITILSNCVFMTM) traverse the membrane as a helical segment. At 145-151 (SNPPAWS) the chain is on the extracellular side. Residues 152 to 172 (KTVEYVFTGIYTFEATVKVLS) traverse the membrane as a helical segment. Residues 173 to 186 (RGFCVGPFTFLRDP) lie on the Cytoplasmic side of the membrane. A helical membrane pass occupies residues 187-204 (WNWLDFMVISMAYITEFV). Residues 205–210 (DLGNVS) lie on the Extracellular side of the membrane. N-linked (GlcNAc...) asparagine glycosylation is present at N208. The helical transmembrane segment at 211–227 (ALRTFRVLRALKTITVI) threads the bilayer. The Cytoplasmic portion of the chain corresponds to 228–246 (PGLKTIVAALIQSVKKMVD). A helical membrane pass occupies residues 247-266 (VMILTVFALAVFALVGLQLF). The Extracellular portion of the chain corresponds to 267-370 (MGNLRHKCIR…PNYGYTSFDS (104 aa)). C274 and C339 form a disulfide bridge. 3 N-linked (GlcNAc...) asparagine glycosylation sites follow: N281, N294, and N341. A disulfide bond links C348 and C354. The segment at residues 371-395 (FGWAFLALFRLMTQDNWESLFQLTL) is an intramembrane region (pore-forming). Residues 396-402 (RAAGQTY) lie on the Extracellular side of the membrane. A helical transmembrane segment spans residues 403-423 (MLFFVVVIFLGSFYLINLILA). At 424-612 (VVAMAYDEQN…KWVHFVVMDP (189 aa)) the chain is on the cytoplasmic side. The stretch at 594–866 (CCEKWVVFKK…QIAIGRITRG (273 aa)) is one II repeat. Residues 613–631 (FVDLAITICIVLNTLFMAM) traverse the membrane as a helical segment. Residues 632–642 (EHYPMTEEFDY) are Extracellular-facing. Residues 643–662 (MLSVGNLVFTGIFAAEMFFK) form a helical membrane-spanning segment. Over 663-676 (LIAMDPYYYFQVGW) the chain is Cytoplasmic. The helical transmembrane segment at 677-696 (NIFDSIIVTLSLVELGLANV) threads the bilayer. At 697–698 (QG) the chain is on the extracellular side. A helical membrane pass occupies residues 699–716 (LSVLRSFRLLRVFKLAKS). Residues 717–732 (WPTLNMLIKIIGNSVG) lie on the Cytoplasmic side of the membrane. The helical transmembrane segment at 733-751 (ALGNLTLVLAIIVFIFAVV) threads the bilayer. Topologically, residues 752–780 (GMQLFGKSYKDCVCKISSDCELPRWHMND) are extracellular. C765 and C771 are disulfide-bonded. The segment at residues 781-801 (FFHSFLIVFRILCGEWIETMW) is an intramembrane region (pore-forming). Residues 802–812 (DCMEVAGAGMC) are Extracellular-facing. Residues C803 and C812 are joined by a disulfide bond. A helical membrane pass occupies residues 813 to 831 (LVVFMMVMVIGNLVVLNLF). The Cytoplasmic portion of the chain corresponds to 832 to 1071 (LALLLSSFSG…TCFTIVEHDW (240 aa)). 2 disordered regions span residues 884-905 (REPQ…TEGM) and 945-982 (LGES…GVED). Positions 948-971 (SDSENPSEDDDDQEDDVDSEVTCE) are enriched in acidic residues. The stretch at 1052-1366 (KGKKWWNLRK…KKYYEAMKKL (315 aa)) is one III repeat. The chain crosses the membrane as a helical span at residues 1072-1089 (FETFIIFMILLSSGALAF). Residues 1090–1102 (EDIYIERRRTVKI) are Extracellular-facing. Residues 1103-1121 (VLEFADKVFTFIFVIEMLL) traverse the membrane as a helical segment. The Cytoplasmic segment spans residues 1122-1135 (KWVAYGFKTYFTNA). A helical membrane pass occupies residues 1136–1154 (WCWLDFFIVDISLISLSAN). The Extracellular portion of the chain corresponds to 1155–1162 (LMGFSDLG). Residues 1163 to 1181 (PIKSLRTLRALRPLRALSR) traverse the membrane as a helical segment. Residues 1182 to 1198 (FEGMRVVVNALIGAIPS) lie on the Cytoplasmic side of the membrane. The chain crosses the membrane as a helical span at residues 1199-1218 (IFNVLLVCLIFWLIFSIMGV). Over 1219–1270 (NLFAGKFYRCINTTTAELFPISVVNNKSDCVALQEATQEARWVNVKVNYDNV) the chain is Extracellular. C1228 and C1248 are oxidised to a cystine. 2 N-linked (GlcNAc...) asparagine glycosylation sites follow: N1230 and N1244. The pore-forming intramembrane region spans 1271 to 1292 (AKGYLSLLQIATFKGWMDIMYP). Residues 1293-1309 (AVDSREVEEQPSYEINL) are Extracellular-facing. A helical transmembrane segment spans residues 1310–1331 (YMYIYFVIFIIFGSFFTLNLFI). The Cytoplasmic portion of the chain corresponds to 1332-1394 (GVIIDNFNQQ…LVFDFISQQF (63 aa)). The interval 1350–1352 (IFM) is important for rapid channel inactivation. One copy of the IV repeat lies at 1375 to 1673 (IPRPANLIQG…WEKFDTGGTQ (299 aa)). Residues 1395-1412 (FDIFIMVLICLNMVTMMV) form a helical membrane-spanning segment. Residues 1413 to 1423 (ETDDQSPAKED) are Extracellular-facing. The helical transmembrane segment at 1424–1442 (FLFKVNVAFIVVFTGECTL) threads the bilayer. Residues 1443 to 1454 (KLFALRHYFFTN) are Cytoplasmic-facing. A helical transmembrane segment spans residues 1455-1472 (GWNIFDFIVVILSIAGTM). The Extracellular portion of the chain corresponds to 1473 to 1485 (LSDIIEKYFVSPT). Residues 1486–1502 (LFRVIRLARIGRILRLI) form a helical membrane-spanning segment. Over 1503 to 1521 (KGARGIRTLLFALMMSLPA) the chain is Cytoplasmic. The helical transmembrane segment at 1522–1539 (LFNIGLLLFLIMFIFSIF) threads the bilayer. Residues 1540 to 1561 (GMSNFAYVKKEAGINDMFNFET) are Extracellular-facing. Residues 1562–1584 (FGSSIICLFQITTSAGWDTLLLP) constitute an intramembrane region (pore-forming). Topologically, residues 1585 to 1614 (MLNKEPPDCDPAFENPGTDVKGNCGNPMMG) are extracellular. A disulfide bond links C1593 and C1608. Residues 1615–1637 (MVFFCSYIIISFLVVVNMYIAII) traverse the membrane as a helical segment. Residues 1638 to 1892 (LENFNVAQEE…TQTILRETNV (255 aa)) are Cytoplasmic-facing. Positions 1767–1796 (EDMAAVVIQRAYRNHLHKRGIHHAAYIQRS) constitute an IQ domain. Residues 1836 to 1856 (RRRPDPQTRCSGARCSPEPPE) form a disordered region.

Belongs to the sodium channel (TC 1.A.1.10) family. Nav1.4/SCN4A subfamily. In terms of assembly, voltage-gated sodium (Nav) channels consist of an ion-conducting alpha subunit which is functional on its own associated with regulatory beta subunits.

The protein resides in the cell membrane. The enzyme catalyses Na(+)(in) = Na(+)(out). Pore-forming subunit of a voltage-gated sodium (Nav) channel that directly mediates the depolarizing phase of action potentials in excitable membranes. Navs, also called VGSCs (voltage-gated sodium channels) or VDSCs (voltage-dependent sodium channels), operate by switching between closed and open conformations depending on the voltage difference across the membrane. In the open conformation they allow Na(+) ions to selectively pass through the pore, along their electrochemical gradient. The influx of Na+ ions provokes membrane depolarization, initiating the propagation of electrical signals throughout cells and tissues. The polypeptide is Sodium channel protein type 4 subunit alpha A (scn4aa) (Takifugu rubripes (Japanese pufferfish)).